Here is a 305-residue protein sequence, read N- to C-terminus: tRNA pseudouridine synthase B (305 aa).

Catalysis depends on aspartate 48, which acts as the Nucleophile.

The protein belongs to the pseudouridine synthase TruB family. Type 1 subfamily.

The enzyme catalyses uridine(55) in tRNA = pseudouridine(55) in tRNA. In terms of biological role, responsible for synthesis of pseudouridine from uracil-55 in the psi GC loop of transfer RNAs. The protein is tRNA pseudouridine synthase B of Pseudomonas syringae pv. syringae (strain B728a).